The following is a 414-amino-acid chain: Gamma-glutamyl phosphate reductase (414 aa).

It belongs to the gamma-glutamyl phosphate reductase family.

The protein resides in the cytoplasm. The enzyme catalyses L-glutamate 5-semialdehyde + phosphate + NADP(+) = L-glutamyl 5-phosphate + NADPH + H(+). The protein operates within amino-acid biosynthesis; L-proline biosynthesis; L-glutamate 5-semialdehyde from L-glutamate: step 2/2. Catalyzes the NADPH-dependent reduction of L-glutamate 5-phosphate into L-glutamate 5-semialdehyde and phosphate. The product spontaneously undergoes cyclization to form 1-pyrroline-5-carboxylate. The polypeptide is Gamma-glutamyl phosphate reductase (Limosilactobacillus reuteri (strain DSM 20016) (Lactobacillus reuteri)).